Consider the following 208-residue polypeptide: MLSSKRRLMRLLPLASLLLTACGLHTQPQNPGQSPTSLQWHQHQQAVEKITHYQTRGAFAWLSERQKVYARFNWQQSAPDRYRLLLTNPLGSTELQLDQQGQVAQIVDNKGKRYVSNDAAQMISQLTGMTIPLSNLRQWMMGLPGEATDYQLDDQYRLREVNFSEEGKRWHVTYLDYHTEQNPQLPANIELQQGDQRIKLKMDSWTIK.

Residues 1–21 form the signal peptide; that stretch reads MLSSKRRLMRLLPLASLLLTA. A lipid anchor (N-palmitoyl cysteine) is attached at Cys22. A lipid anchor (S-diacylglycerol cysteine) is attached at Cys22.

The protein belongs to the LolB family. Monomer.

It is found in the cell outer membrane. Its function is as follows. Plays a critical role in the incorporation of lipoproteins in the outer membrane after they are released by the LolA protein. The chain is Outer-membrane lipoprotein LolB from Erwinia tasmaniensis (strain DSM 17950 / CFBP 7177 / CIP 109463 / NCPPB 4357 / Et1/99).